We begin with the raw amino-acid sequence, 312 residues long: Olfactory receptor 6C76 (312 aa).

The Extracellular portion of the chain corresponds to 1-23 (MKNRTSVTDFILLGLTDNPQLQV). Asparagine 3 is a glycosylation site (N-linked (GlcNAc...) asparagine). A helical transmembrane segment spans residues 24–44 (VIFSFLFLTYVLSVTGNLTII). Residues 45 to 57 (SLTLLDSHLKTPM) lie on the Cytoplasmic side of the membrane. A helical transmembrane segment spans residues 58-80 (YFFLRNFSLEISFTSVCNPRFLI). At 81–94 (SILTGDKSISYNAC) the chain is on the extracellular side. Cysteine 94 and cysteine 176 are oxidised to a cystine. A helical membrane pass occupies residues 95–115 (AAQLFFFIFLGSTEFFLLASM). Residues 116–142 (SYDCYVAICKPLHYTTIMSDRICYQLI) lie on the Cytoplasmic side of the membrane. The helical transmembrane segment at 143–163 (ISSWLAGFLVIFPPLAMGLQL) threads the bilayer. Over 164–195 (DFCDSNVIDHFTCDSAPLLQISCTDTSTLELM) the chain is Extracellular. Residues 196–216 (SFILALFTLISTLILVILSYT) traverse the membrane as a helical segment. The Cytoplasmic portion of the chain corresponds to 217–238 (YIIRTILRIPSAQQRKKAFSTC). A helical transmembrane segment spans residues 239–259 (SSHVIVVSISYGSCIFMYVKT). The Extracellular segment spans residues 260–267 (SAKEGVAL). The helical transmembrane segment at 268-288 (TKGVAILNTSVAPMLNPFIYT) threads the bilayer. Topologically, residues 289 to 312 (LRNQQVKQAFKDVLRKISHKKKKH) are cytoplasmic.

The protein belongs to the G-protein coupled receptor 1 family.

It is found in the cell membrane. Odorant receptor. The protein is Olfactory receptor 6C76 (OR6C76) of Homo sapiens (Human).